We begin with the raw amino-acid sequence, 119 residues long: Ribonuclease P protein component (119 aa).

Belongs to the RnpA family. As to quaternary structure, consists of a catalytic RNA component (M1 or rnpB) and a protein subunit.

It catalyses the reaction Endonucleolytic cleavage of RNA, removing 5'-extranucleotides from tRNA precursor.. In terms of biological role, RNaseP catalyzes the removal of the 5'-leader sequence from pre-tRNA to produce the mature 5'-terminus. It can also cleave other RNA substrates such as 4.5S RNA. The protein component plays an auxiliary but essential role in vivo by binding to the 5'-leader sequence and broadening the substrate specificity of the ribozyme. The chain is Ribonuclease P protein component from Nitrosococcus oceani (strain ATCC 19707 / BCRC 17464 / JCM 30415 / NCIMB 11848 / C-107).